Here is a 612-residue protein sequence, read N- to C-terminus: Dihydroxy-acid dehydratase (612 aa).

Aspartate 81 provides a ligand contact to Mg(2+). Cysteine 122 is a binding site for [2Fe-2S] cluster. Mg(2+)-binding residues include aspartate 123 and lysine 124. Lysine 124 is modified (N6-carboxylysine). Cysteine 193 contacts [2Fe-2S] cluster. Glutamate 489 lines the Mg(2+) pocket. The Proton acceptor role is filled by serine 515.

The protein belongs to the IlvD/Edd family. As to quaternary structure, homodimer. It depends on [2Fe-2S] cluster as a cofactor. Requires Mg(2+) as cofactor.

It catalyses the reaction (2R)-2,3-dihydroxy-3-methylbutanoate = 3-methyl-2-oxobutanoate + H2O. It carries out the reaction (2R,3R)-2,3-dihydroxy-3-methylpentanoate = (S)-3-methyl-2-oxopentanoate + H2O. The protein operates within amino-acid biosynthesis; L-isoleucine biosynthesis; L-isoleucine from 2-oxobutanoate: step 3/4. It participates in amino-acid biosynthesis; L-valine biosynthesis; L-valine from pyruvate: step 3/4. Functionally, functions in the biosynthesis of branched-chain amino acids. Catalyzes the dehydration of (2R,3R)-2,3-dihydroxy-3-methylpentanoate (2,3-dihydroxy-3-methylvalerate) into 2-oxo-3-methylpentanoate (2-oxo-3-methylvalerate) and of (2R)-2,3-dihydroxy-3-methylbutanoate (2,3-dihydroxyisovalerate) into 2-oxo-3-methylbutanoate (2-oxoisovalerate), the penultimate precursor to L-isoleucine and L-valine, respectively. The chain is Dihydroxy-acid dehydratase from Stutzerimonas stutzeri (strain A1501) (Pseudomonas stutzeri).